Here is an 89-residue protein sequence, read N- to C-terminus: Small ribosomal subunit protein uS15 (89 aa).

The protein belongs to the universal ribosomal protein uS15 family. Part of the 30S ribosomal subunit. Forms a bridge to the 50S subunit in the 70S ribosome, contacting the 23S rRNA.

Functionally, one of the primary rRNA binding proteins, it binds directly to 16S rRNA where it helps nucleate assembly of the platform of the 30S subunit by binding and bridging several RNA helices of the 16S rRNA. Forms an intersubunit bridge (bridge B4) with the 23S rRNA of the 50S subunit in the ribosome. In Polynucleobacter necessarius subsp. necessarius (strain STIR1), this protein is Small ribosomal subunit protein uS15.